The following is a 130-amino-acid chain: Phosphoribosyl-AMP cyclohydrolase (130 aa).

Mg(2+) is bound at residue Asp77. Zn(2+) is bound at residue Cys78. Asp79 and Asp81 together coordinate Mg(2+). 2 residues coordinate Zn(2+): Cys95 and Cys102.

The protein belongs to the PRA-CH family. In terms of assembly, homodimer. The cofactor is Mg(2+). Requires Zn(2+) as cofactor.

The protein localises to the cytoplasm. The enzyme catalyses 1-(5-phospho-beta-D-ribosyl)-5'-AMP + H2O = 1-(5-phospho-beta-D-ribosyl)-5-[(5-phospho-beta-D-ribosylamino)methylideneamino]imidazole-4-carboxamide. It participates in amino-acid biosynthesis; L-histidine biosynthesis; L-histidine from 5-phospho-alpha-D-ribose 1-diphosphate: step 3/9. Its function is as follows. Catalyzes the hydrolysis of the adenine ring of phosphoribosyl-AMP. The protein is Phosphoribosyl-AMP cyclohydrolase of Pseudomonas putida (strain ATCC 700007 / DSM 6899 / JCM 31910 / BCRC 17059 / LMG 24140 / F1).